Reading from the N-terminus, the 381-residue chain is MPSLQDYHVPYPAAAPGQVRKVIYLPRQNPTVEQQHLRVQIIPGRHENCDDGRLYKLTGSVTEETLQGWGYSYYVVTLGDIYAAHRSSSDPARATTFVALDESPVIAYNSKLPIVVYVPEGAELRYRIWTDDASLAQSIQQKPEAPALPQPHLVPVTEGQECPQELPRCGAPSEYVRQDYKASMLSVEEVHRLSNNTPPLIPSAVHESAHEAHAAPPLHSAVLEEHGRPGMEHLEVCPKNNGSEGREQPAEEASTLKQRSSSSSSNPRHHSANESSPSRPRLSSTAYWPQENSKTKRSPSATHKPRRSTDSAAIEETGVGTPKKNRSSSGSASNKRKAEDDVYEKTMKNFWNRARSDSPRKASASSTKSGNGSKADPVDGK.

The disordered stretch occupies residues 232–381 (EHLEVCPKNN…GSKADPVDGK (150 aa)). Residues 273–292 (NESSPSRPRLSSTAYWPQEN) are compositionally biased toward polar residues. The segment covering 336–347 (RKAEDDVYEKTM) has biased composition (basic and acidic residues). The segment covering 363–372 (SASSTKSGNG) has biased composition (polar residues).

It belongs to the protease inhibitor I11 (ecotin) family.

The polypeptide is Ecotin-like protein 3 (Leishmania major).